The following is a 236-amino-acid chain: Flagellar L-ring protein (236 aa).

The signal sequence occupies residues 1 to 24; that stretch reads MKNKNRLNTIKLLSISLLIAVTTA. Residue C25 is the site of N-palmitoyl cysteine attachment. The S-diacylglycerol cysteine moiety is linked to residue C25.

The protein belongs to the FlgH family. The basal body constitutes a major portion of the flagellar organelle and consists of four rings (L,P,S, and M) mounted on a central rod.

The protein localises to the cell outer membrane. Its subcellular location is the bacterial flagellum basal body. In terms of biological role, assembles around the rod to form the L-ring and probably protects the motor/basal body from shearing forces during rotation. The protein is Flagellar L-ring protein of Colwellia psychrerythraea (strain 34H / ATCC BAA-681) (Vibrio psychroerythus).